We begin with the raw amino-acid sequence, 279 residues long: Replication protein A 32 kDa subunit A (279 aa).

The segment at 1-33 is disordered; that stretch reads MFSSSQFEPNSGFSGGGFMSSQPSQAYESSSST. Low complexity predominate over residues 19–32; that stretch reads MSSQPSQAYESSSS. The segment at residues 73 to 148 is a DNA-binding region (OB); that stretch reads VSLVGLVCDK…QLLVFSVRPI (76 aa).

The protein belongs to the replication factor A protein 2 family. Heterotrimer of RPA1, RPA2 and RPA3 (canonical replication protein A complex). Interacts with ROS1. Binds to ASE1/At3g02920, PDX2, At5g62350, RPA1A/At2g06510, ARF1/At1g10630, At4g18590 and At3g52630. In terms of processing, phosphorylated in a cell-cycle-dependent manner (from the S phase until mitosis). In response to DNA damage, recruited to DNA-repair nuclear foci, as a hypophosphorylated form. In terms of tissue distribution, strongly expressed in shoot and root meristems. Present in seedlings, roots, leaves, siliques and flowers.

It localises to the nucleus. Component of the replication protein A complex (RPA) required for DNA recombination, repair and replication. The activity of RPA is mediated by single-stranded DNA binding and protein interactions. Required fo cell division in meristems. Involved in the maintenance of transcriptional epigenetic gene silencing (TGS) at specific loci (including some transposons) by regulating histone H3 acetylation, 'Lys-4' and 'Lys-9' methylation. The sequence is that of Replication protein A 32 kDa subunit A (RPA2A) from Arabidopsis thaliana (Mouse-ear cress).